The following is a 444-amino-acid chain: Orexin receptor type 2 (444 aa).

Over residues 1–10 (MSGTKLEDSP) the composition is skewed to basic and acidic residues. Positions 1 to 30 (MSGTKLEDSPPCRNWSSAPELNETQEPFLN) are disordered. Residues 1-54 (MSGTKLEDSPPCRNWSSAPELNETQEPFLNPTDYDDEEFLRYLWREYLHPKEYE) lie on the Extracellular side of the membrane. N-linked (GlcNAc...) asparagine glycosylation is found at N14 and N22. A compositionally biased stretch (polar residues) spans 14–27 (NWSSAPELNETQEP). Positions 33–49 (DYDDEEFLRYLWREYLH) are required for response to orexin-A. The helical transmembrane segment at 55–75 (WVLIAGYIIVFVVALVGNVLV) threads the bilayer. Residues 76–88 (CVAVWKNHHMRTV) lie on the Cytoplasmic side of the membrane. Residues 89–110 (TNYFIVNLSLADVLVTITCLPA) form a helical membrane-spanning segment. Residues 111 to 127 (TLVVDITETWFFGQSLC) lie on the Extracellular side of the membrane. Residues C127 and C210 are joined by a disulfide bond. Residues 128-150 (KVIPYLQTVSVSVSVLTLSCIAL) form a helical membrane-spanning segment. The Cytoplasmic segment spans residues 151–170 (DRWYAICHPLMFKSTAKRAR). Residues 171 to 191 (NSIVIIWIVSCIIMIPQAIVM) traverse the membrane as a helical segment. At 192 to 222 (ECSTMLPGLANKTTLFTVCDERWGGEIYPKM) the chain is on the extracellular side. Residue N202 is glycosylated (N-linked (GlcNAc...) asparagine). The helical transmembrane segment at 223–243 (YHICFFLVTYMAPLCLMVLAY) threads the bilayer. The Cytoplasmic segment spans residues 244-304 (LQIFRKLWCR…QIRARRKTAR (61 aa)). The helical transmembrane segment at 305–326 (MLMVVLLVFAICYLPISILNVL) threads the bilayer. Topologically, residues 327-342 (KRVFGMFTHTEDRETV) are extracellular. Residues 343–366 (YAWFTFSHWLVYANSAANPIIYNF) traverse the membrane as a helical segment. Topologically, residues 367-444 (LSGKFREEFK…ANGAGPLQNW (78 aa)) are cytoplasmic.

The protein belongs to the G-protein coupled receptor 1 family.

The protein resides in the cell membrane. Its function is as follows. Nonselective, high-affinity receptor for both orexin-A and orexin-B neuropeptides. Triggers an increase in cytoplasmic Ca(2+) levels in response to orexin-A binding. The protein is Orexin receptor type 2 (HCRTR2) of Canis lupus familiaris (Dog).